The primary structure comprises 747 residues: UPF0313 protein PA4928 (747 aa).

The 270-residue stretch at 371 to 640 folds into the Radical SAM core domain; that stretch reads AYEMIRFSVN…KSDQQRRLHK (270 aa). Residues cysteine 385, cysteine 389, and cysteine 392 each contribute to the [4Fe-4S] cluster site. Residues 670–747 form a disordered region; sequence GKHHLVPTYQ…KKSRQPNIPR (78 aa).

It belongs to the UPF0313 family. Requires [4Fe-4S] cluster as cofactor.

The chain is UPF0313 protein PA4928 from Pseudomonas aeruginosa (strain ATCC 15692 / DSM 22644 / CIP 104116 / JCM 14847 / LMG 12228 / 1C / PRS 101 / PAO1).